Here is a 131-residue protein sequence, read N- to C-terminus: UPF0382 inner membrane protein YgdD (131 aa).

Topologically, residues 1 to 4 are periplasmic; the sequence is MTSR. Residues 5 to 25 traverse the membrane as a helical segment; that stretch reads FMLIFAAISGFIFVALGAFGA. Residues 26 to 64 lie on the Cytoplasmic side of the membrane; sequence HVLSKTMGAVEMGWIQTGLEYQAFHTLAILGLAVAMQRR. A helical membrane pass occupies residues 65-85; the sequence is ISIWFYWSSVFLALGTVLFSG. Residues 86–97 are Periplasmic-facing; it reads SLYCLALSHLRL. A helical membrane pass occupies residues 98–118; it reads WAFVTPVGGVSFLAGWALMLV. At 119–131 the chain is on the cytoplasmic side; it reads GAIRLKRKGVSHE.

This sequence belongs to the UPF0382 family.

Its subcellular location is the cell inner membrane. In Escherichia coli O157:H7, this protein is UPF0382 inner membrane protein YgdD (ygdD).